The following is a 227-amino-acid chain: Ribose-5-phosphate isomerase A (227 aa).

Substrate is bound by residues 30-33 (TGST), 86-89 (DGAD), and 99-102 (KGMG). Glu108 (proton acceptor) is an active-site residue. Residue Lys126 participates in substrate binding.

The protein belongs to the ribose 5-phosphate isomerase family. As to quaternary structure, homodimer.

It catalyses the reaction aldehydo-D-ribose 5-phosphate = D-ribulose 5-phosphate. It functions in the pathway carbohydrate degradation; pentose phosphate pathway; D-ribose 5-phosphate from D-ribulose 5-phosphate (non-oxidative stage): step 1/1. In terms of biological role, catalyzes the reversible conversion of ribose-5-phosphate to ribulose 5-phosphate. This chain is Ribose-5-phosphate isomerase A, found in Thermus thermophilus (strain ATCC 27634 / DSM 579 / HB8).